Here is a 589-residue protein sequence, read N- to C-terminus: WD repeat-containing protein 26 homolog (589 aa).

The tract at residues methionine 1 to isoleucine 57 is disordered. A compositionally biased stretch (low complexity) spans serine 25–serine 39. The 33-residue stretch at arginine 64–leucine 96 folds into the LisH domain. A CTLH domain is found at histidine 97–aspartate 154. WD repeat units follow at residues serine 272–leucine 311, glycine 317–glutamate 358, glycine 360–tryptophan 398, glutamine 401–isoleucine 440, glutamate 442–serine 480, glycine 484–glutamate 526, and glycine 529–glutamine 569.

In terms of assembly, interacts with RANBPM. In terms of tissue distribution, expressed in roots, leaves and flowers.

Its subcellular location is the cytoplasm. Its function is as follows. Acts as a component involved in the crosstalk regulation between light, hormone and abiotic stress response. This is WD repeat-containing protein 26 homolog from Arabidopsis thaliana (Mouse-ear cress).